Reading from the N-terminus, the 87-residue chain is U24 protein (87 aa).

A Phosphothreonine modification is found at Thr6. Positions 8-11 (PPSY) match the PPXY motif motif. The chain crosses the membrane as a helical span at residues 59–79 (FLVLTGLAIAMILFIVFVLYV).

Interacts with host ITCH; this interaction probably mediates ITCH degradation. Interacts probably with NEDD4.

The protein localises to the membrane. In terms of biological role, down-regulates the TCR/CD3E complex and the transferrin receptor TFRC in host T-cells by blocking them from recycling back to the cell surface. This is U24 protein (U24) from Homo sapiens (Human).